Consider the following 362-residue polypeptide: Alternative oxidase, mitochondrial (362 aa).

Residues 1–64 (MNTPKVNILH…RNFSTTSVTR (64 aa)) constitute a mitochondrion transit peptide. Residues 156 to 176 (LVRFIFLESIAGVPGMVAGML) form a helical membrane-spanning segment. 3 residues coordinate Fe cation: Glu-163, Glu-202, and His-205. A helical membrane pass occupies residues 222–242 (LILGAQGVFFNAMFLSYLISP). The Fe cation site is built by Glu-253, Glu-310, and His-313.

It belongs to the alternative oxidase family. As to quaternary structure, homodimer; disulfide-linked. Fe cation is required as a cofactor.

It localises to the mitochondrion inner membrane. Catalyzes cyanide-resistant oxygen consumption. May increase respiration when the cytochrome respiratory pathway is restricted, or in response to low temperatures. This chain is Alternative oxidase, mitochondrial (aod-1), found in Neurospora crassa (strain ATCC 24698 / 74-OR23-1A / CBS 708.71 / DSM 1257 / FGSC 987).